The primary structure comprises 539 residues: ATP synthase subunit beta (539 aa).

The tract at residues 1 to 44 (MAKTPAEKPATAAKKPAAPKAAAAPKAAAAKAPAAAKAPAAKKP) is disordered. Residue 212–219 (GGAGVGKT) participates in ATP binding.

The protein belongs to the ATPase alpha/beta chains family. In terms of assembly, F-type ATPases have 2 components, CF(1) - the catalytic core - and CF(0) - the membrane proton channel. CF(1) has five subunits: alpha(3), beta(3), gamma(1), delta(1), epsilon(1). CF(0) has three main subunits: a(1), b(2) and c(9-12). The alpha and beta chains form an alternating ring which encloses part of the gamma chain. CF(1) is attached to CF(0) by a central stalk formed by the gamma and epsilon chains, while a peripheral stalk is formed by the delta and b chains.

Its subcellular location is the cell inner membrane. It catalyses the reaction ATP + H2O + 4 H(+)(in) = ADP + phosphate + 5 H(+)(out). Functionally, produces ATP from ADP in the presence of a proton gradient across the membrane. The catalytic sites are hosted primarily by the beta subunits. In Caulobacter vibrioides (strain ATCC 19089 / CIP 103742 / CB 15) (Caulobacter crescentus), this protein is ATP synthase subunit beta.